We begin with the raw amino-acid sequence, 262 residues long: Adenosylcobinamide-GDP ribazoletransferase (262 aa).

6 consecutive transmembrane segments (helical) span residues 43 to 63 (YFGLVGLLVGLLSAIVFWLTQ), 66 to 86 (LPAGVSVLLSMVTGVLLTGGF), 120 to 140 (GALALMLVLMLKWQLLVELAL), 146 to 166 (AGSAMIVAHTVSRVVAASLIF), 191 to 211 (LFILIASGVLVLLVLKGIAAL), and 242 to 262 (AAQQICEIVCYFVLLVVGSIL).

The protein belongs to the CobS family. Mg(2+) is required as a cofactor.

It localises to the cell inner membrane. The enzyme catalyses alpha-ribazole + adenosylcob(III)inamide-GDP = adenosylcob(III)alamin + GMP + H(+). It catalyses the reaction alpha-ribazole 5'-phosphate + adenosylcob(III)inamide-GDP = adenosylcob(III)alamin 5'-phosphate + GMP + H(+). Its pathway is cofactor biosynthesis; adenosylcobalamin biosynthesis; adenosylcobalamin from cob(II)yrinate a,c-diamide: step 7/7. Its function is as follows. Joins adenosylcobinamide-GDP and alpha-ribazole to generate adenosylcobalamin (Ado-cobalamin). Also synthesizes adenosylcobalamin 5'-phosphate from adenosylcobinamide-GDP and alpha-ribazole 5'-phosphate. In Shewanella sp. (strain ANA-3), this protein is Adenosylcobinamide-GDP ribazoletransferase.